We begin with the raw amino-acid sequence, 323 residues long: Formyltetrahydrofolate deformylase 1, mitochondrial (323 aa).

The N-terminal 25 residues, 1–25 (MIRRITERASGFAKNIPILKSSRFH), are a transit peptide targeting the mitochondrion. In terms of domain architecture, ACT spans 41-124 (VHVFHCQDAV…SVVRVPSIDP (84 aa)). Residue Asp267 is part of the active site.

The protein belongs to the PurU family. In terms of tissue distribution, expressed in leaves, cotyledons, roots, seeds and flowers.

Its subcellular location is the mitochondrion. It catalyses the reaction (6R)-10-formyltetrahydrofolate + H2O = (6S)-5,6,7,8-tetrahydrofolate + formate + H(+). Its function is as follows. Deformylase involved in photorespiration. Prevents excessive accumulation of 5-formyl tetrahydrofolate (THF), a potent inhibitor of the Gly decarboxylase/Ser hydroxymethyltransferase complex. This is Formyltetrahydrofolate deformylase 1, mitochondrial (PURU1) from Arabidopsis thaliana (Mouse-ear cress).